A 391-amino-acid chain; its full sequence is Heme A synthase (391 aa).

8 helical membrane-spanning segments follow: residues 37–57 (IRLW…VGGL), 121–141 (RQLG…FLVA), 152–172 (LLAL…MVAS), 186–206 (LAVH…QALL), 229–249 (TTVL…VAGI), 298–318 (FLHR…WIFG), 332–352 (LLAL…LSAA), and 354–374 (WQVA…ILHA). His300 is a binding site for heme. Position 360 (His360) interacts with heme.

The protein belongs to the COX15/CtaA family. Type 2 subfamily. As to quaternary structure, interacts with CtaB. Heme b serves as cofactor.

The protein localises to the cell membrane. It carries out the reaction Fe(II)-heme o + 2 A + H2O = Fe(II)-heme a + 2 AH2. Its pathway is porphyrin-containing compound metabolism; heme A biosynthesis; heme A from heme O: step 1/1. Catalyzes the conversion of heme O to heme A by two successive hydroxylations of the methyl group at C8. The first hydroxylation forms heme I, the second hydroxylation results in an unstable dihydroxymethyl group, which spontaneously dehydrates, resulting in the formyl group of heme A. The chain is Heme A synthase from Cereibacter sphaeroides (strain ATCC 17025 / ATH 2.4.3) (Rhodobacter sphaeroides).